Consider the following 469-residue polypeptide: Mannosyl-oligosaccharide 1,2-alpha-mannosidase IA (469 aa).

Topologically, residues 1–469 (REPADAAVRE…DQKEVEVKVK (469 aa)) are lumenal. A disulfide bridge links cysteine 292 with cysteine 324. An N-linked (GlcNAc...) asparagine glycan is attached at asparagine 329. Glutamate 338 functions as the Proton donor in the catalytic mechanism. Ca(2+) is bound at residue threonine 449.

Belongs to the glycosyl hydrolase 47 family. The cofactor is Ca(2+).

The protein localises to the golgi apparatus membrane. The enzyme catalyses N(4)-(alpha-D-Man-(1-&gt;2)-alpha-D-Man-(1-&gt;2)-alpha-D-Man-(1-&gt;3)-[alpha-D-Man-(1-&gt;2)-alpha-D-Man-(1-&gt;3)-[alpha-D-Man-(1-&gt;2)-alpha-D-Man-(1-&gt;6)]-alpha-D-Man-(1-&gt;6)]-beta-D-Man-(1-&gt;4)-beta-D-GlcNAc-(1-&gt;4)-beta-D-GlcNAc)-L-asparaginyl-[protein] (N-glucan mannose isomer 9A1,2,3B1,2,3) + 4 H2O = N(4)-(alpha-D-Man-(1-&gt;3)-[alpha-D-Man-(1-&gt;3)-[alpha-D-Man-(1-&gt;6)]-alpha-D-Man-(1-&gt;6)]-beta-D-Man-(1-&gt;4)-beta-D-GlcNAc-(1-&gt;4)-beta-D-GlcNAc)-L-asparaginyl-[protein] (N-glucan mannose isomer 5A1,2) + 4 beta-D-mannose. It catalyses the reaction N(4)-(alpha-D-Man-(1-&gt;2)-alpha-D-Man-(1-&gt;2)-alpha-D-Man-(1-&gt;3)-[alpha-D-Man-(1-&gt;3)-[alpha-D-Man-(1-&gt;2)-alpha-D-Man-(1-&gt;6)]-alpha-D-Man-(1-&gt;6)]-beta-D-Man-(1-&gt;4)-beta-D-GlcNAc-(1-&gt;4)-beta-D-GlcNAc)-L-asparaginyl-[protein] (N-glucan mannose isomer 8A1,2,3B1,3) + 3 H2O = N(4)-(alpha-D-Man-(1-&gt;3)-[alpha-D-Man-(1-&gt;3)-[alpha-D-Man-(1-&gt;6)]-alpha-D-Man-(1-&gt;6)]-beta-D-Man-(1-&gt;4)-beta-D-GlcNAc-(1-&gt;4)-beta-D-GlcNAc)-L-asparaginyl-[protein] (N-glucan mannose isomer 5A1,2) + 3 beta-D-mannose. It functions in the pathway protein modification; protein glycosylation. Inhibited by both 1-deoxymannojirimycin and kifunensine. Involved in the maturation of Asn-linked oligosaccharides. Progressively trim alpha-1,2-linked mannose residues from Man(9)GlcNAc(2) to produce Man(5)GlcNAc(2). The chain is Mannosyl-oligosaccharide 1,2-alpha-mannosidase IA (MAN1A1) from Oryctolagus cuniculus (Rabbit).